The following is a 792-amino-acid chain: Host cell factor 2 (792 aa).

Kelch repeat units follow at residues 34–79 (LMII…GFVC), 83–130 (RILV…RLGH), 207–255 (KMYV…VIGN), and 257–303 (MYIF…VSDS). The Fibronectin type-III 1 domain maps to 359–449 (APSQVQLIKA…QPATKETSMK (91 aa)). Residues 399–447 (ASSDSSAAPNMQGVRMDPHRQGSNNIVPNSINDTINSTKTEQPATKETS) are disordered. Residues 419–445 (QGSNNIVPNSINDTINSTKTEQPATKE) show a composition bias toward polar residues. Residue K553 forms a Glycyl lysine isopeptide (Lys-Gly) (interchain with G-Cter in SUMO2) linkage. Fibronectin type-III domains lie at 583–675 (TPSN…TCIP) and 677–787 (FPGA…GNNK).

In terms of assembly, binds KMT2A/MLL1. Component of the MLL1/MLL complex, at least composed of KMT2A/MLL1, ASH2L, RBBP5, DPY30, WDR5, MEN1, HCFC1 and HCFC2. Interacts with TASOR. As to expression, highly expressed in testis. Detected at lower levels in spleen, thymus, prostate, ovary, small intestine and colon.

The protein localises to the cytoplasm. It localises to the nucleus. In Homo sapiens (Human), this protein is Host cell factor 2 (HCFC2).